We begin with the raw amino-acid sequence, 131 residues long: Global transcriptional regulator Spx (131 aa).

A disulfide bridge connects residues cysteine 10 and cysteine 13.

Belongs to the ArsC family. Spx subfamily. Interacts with the C-terminal domain of the alpha subunit of the RNAP.

It is found in the cytoplasm. Functionally, global transcriptional regulator that plays a key role in stress response and exerts either positive or negative regulation of genes. Acts by interacting with the C-terminal domain of the alpha subunit of the RNA polymerase (RNAP). This interaction can enhance binding of RNAP to the promoter region of target genes and stimulate their transcription, or block interaction of RNAP with activator. This chain is Global transcriptional regulator Spx, found in Listeria innocua serovar 6a (strain ATCC BAA-680 / CLIP 11262).